We begin with the raw amino-acid sequence, 79 residues long: Small ribosomal subunit protein bS16 (79 aa).

It belongs to the bacterial ribosomal protein bS16 family.

The sequence is that of Small ribosomal subunit protein bS16 from Nitratidesulfovibrio vulgaris (strain ATCC 29579 / DSM 644 / CCUG 34227 / NCIMB 8303 / VKM B-1760 / Hildenborough) (Desulfovibrio vulgaris).